Consider the following 236-residue polypeptide: Large ribosomal subunit protein uL1 (236 aa).

The protein belongs to the universal ribosomal protein uL1 family. In terms of assembly, part of the 50S ribosomal subunit.

Its function is as follows. Binds directly to 23S rRNA. The L1 stalk is quite mobile in the ribosome, and is involved in E site tRNA release. Functionally, protein L1 is also a translational repressor protein, it controls the translation of the L11 operon by binding to its mRNA. The chain is Large ribosomal subunit protein uL1 from Corynebacterium jeikeium (strain K411).